Here is a 349-residue protein sequence, read N- to C-terminus: 4-hydroxy-3-methylbut-2-en-1-yl diphosphate synthase (flavodoxin) (349 aa).

The [4Fe-4S] cluster site is built by Cys264, Cys267, Cys299, and Glu306.

The protein belongs to the IspG family. [4Fe-4S] cluster is required as a cofactor.

The enzyme catalyses (2E)-4-hydroxy-3-methylbut-2-enyl diphosphate + oxidized [flavodoxin] + H2O + 2 H(+) = 2-C-methyl-D-erythritol 2,4-cyclic diphosphate + reduced [flavodoxin]. It functions in the pathway isoprenoid biosynthesis; isopentenyl diphosphate biosynthesis via DXP pathway; isopentenyl diphosphate from 1-deoxy-D-xylulose 5-phosphate: step 5/6. Converts 2C-methyl-D-erythritol 2,4-cyclodiphosphate (ME-2,4cPP) into 1-hydroxy-2-methyl-2-(E)-butenyl 4-diphosphate. In Clostridium tetani (strain Massachusetts / E88), this protein is 4-hydroxy-3-methylbut-2-en-1-yl diphosphate synthase (flavodoxin).